The sequence spans 176 residues: ATP-dependent protease subunit HslV (176 aa).

T6 is a catalytic residue. Na(+) is bound by residues S161, C164, and T167.

Belongs to the peptidase T1B family. HslV subfamily. As to quaternary structure, a double ring-shaped homohexamer of HslV is capped on each side by a ring-shaped HslU homohexamer. The assembly of the HslU/HslV complex is dependent on binding of ATP.

It localises to the cytoplasm. The catalysed reaction is ATP-dependent cleavage of peptide bonds with broad specificity.. Allosterically activated by HslU binding. Protease subunit of a proteasome-like degradation complex believed to be a general protein degrading machinery. In Aquifex aeolicus (strain VF5), this protein is ATP-dependent protease subunit HslV.